The chain runs to 78 residues: D-alanyl carrier protein (78 aa).

The 78-residue stretch at 1 to 78 folds into the Carrier domain; it reads MAFRENVLEI…MIITQLEALK (78 aa). Ser36 is subject to O-(pantetheine 4'-phosphoryl)serine.

Belongs to the DltC family. 4'-phosphopantetheine is transferred from CoA to a specific serine of apo-DCP.

Its subcellular location is the cytoplasm. It functions in the pathway cell wall biogenesis; lipoteichoic acid biosynthesis. Functionally, carrier protein involved in the D-alanylation of lipoteichoic acid (LTA). The loading of thioester-linked D-alanine onto DltC is catalyzed by D-alanine--D-alanyl carrier protein ligase DltA. The DltC-carried D-alanyl group is further transferred to cell membrane phosphatidylglycerol (PG) by forming an ester bond, probably catalyzed by DltD. D-alanylation of LTA plays an important role in modulating the properties of the cell wall in Gram-positive bacteria, influencing the net charge of the cell wall. The polypeptide is D-alanyl carrier protein (Listeria welshimeri serovar 6b (strain ATCC 35897 / DSM 20650 / CCUG 15529 / CIP 8149 / NCTC 11857 / SLCC 5334 / V8)).